The chain runs to 335 residues: Lipase chaperone (335 aa).

Residues 1–21 form a helical membrane-spanning segment; sequence MSGSILLLPLAIALGLGFFIA.

This sequence belongs to the lipase chaperone family.

Its subcellular location is the cell inner membrane. Functionally, may be involved in the folding of the extracellular lipase during its passage through the periplasm. The protein is Lipase chaperone of Stutzerimonas stutzeri (strain A1501) (Pseudomonas stutzeri).